A 223-amino-acid polypeptide reads, in one-letter code: GTP cyclohydrolase 1 (223 aa).

Residues C114, H117, and C185 each coordinate Zn(2+).

It belongs to the GTP cyclohydrolase I family. As to quaternary structure, homomer.

It carries out the reaction GTP + H2O = 7,8-dihydroneopterin 3'-triphosphate + formate + H(+). Its pathway is cofactor biosynthesis; 7,8-dihydroneopterin triphosphate biosynthesis; 7,8-dihydroneopterin triphosphate from GTP: step 1/1. This chain is GTP cyclohydrolase 1, found in Chlorobium chlorochromatii (strain CaD3).